Reading from the N-terminus, the 353-residue chain is Polycomb group RING finger protein 6 (353 aa).

The tract at residues 1 to 116 (MDEAETDATE…FSLRLESGRA (116 aa)) is disordered. A compositionally biased stretch (basic and acidic residues) spans 9–19 (TENKRASEAKR). Residues 23-39 (MPPPPPPPPPISPPALI) show a composition bias toward pro residues. Phosphoserine is present on Ser-34. Low complexity predominate over residues 40–52 (PAPAAGEEGPASL). Residues 69–82 (EPERSLGRLRGRFE) show a composition bias toward basic and acidic residues. The stretch at 71 to 112 (ERSLGRLRGRFEDYDEELEEEEEMEEEEEEEEEMSHFSLRLE) forms a coiled coil. The segment covering 83–103 (DYDEELEEEEEMEEEEEEEEE) has biased composition (acidic residues). Ser-118 is modified (phosphoserine). The RING-type zinc-finger motif lies at 137–176 (CSICKGYLIDATTITECLHTFCKSCIVRHFYYSNRCPKCN). Residues Lys-226 and Lys-237 each participate in a glycyl lysine isopeptide (Lys-Gly) (interchain with G-Cter in SUMO2) cross-link.

As to quaternary structure, component of a PRC1-like complex. Interacts with BMI1/PCGF4, RING1 and RNF2. Interacts with KDM5D. Interacts with CBX4, CBX6, CBX7 and CBX8. In terms of processing, phosphorylated during mitosis. In terms of tissue distribution, expressed in ovary, testis, stomach, liver, thymus and kidney (at protein level).

It is found in the nucleus. Its function is as follows. Transcriptional repressor. May modulate the levels of histone H3K4Me3 by activating KDM5D histone demethylase. Component of a Polycomb group (PcG) multiprotein PRC1-like complex, a complex class required to maintain the transcriptionally repressive state of many genes, including Hox genes, throughout development. PcG PRC1 complex acts via chromatin remodeling and modification of histones; it mediates monoubiquitination of histone H2A 'Lys-119', rendering chromatin heritably changed in its expressibility. Within the PRC1-like complex, regulates RNF2 ubiquitin ligase activity. This Mus musculus (Mouse) protein is Polycomb group RING finger protein 6 (Pcgf6).